A 212-amino-acid polypeptide reads, in one-letter code: Imidazole glycerol phosphate synthase subunit HisH (212 aa).

Residues 2-212 form the Glutamine amidotransferase type-1 domain; the sequence is QTAIIDYGMG…LTMLKNFLNW (211 aa). C85 serves as the catalytic Nucleophile. Active-site residues include H194 and E196.

As to quaternary structure, heterodimer of HisH and HisF.

Its subcellular location is the cytoplasm. It catalyses the reaction 5-[(5-phospho-1-deoxy-D-ribulos-1-ylimino)methylamino]-1-(5-phospho-beta-D-ribosyl)imidazole-4-carboxamide + L-glutamine = D-erythro-1-(imidazol-4-yl)glycerol 3-phosphate + 5-amino-1-(5-phospho-beta-D-ribosyl)imidazole-4-carboxamide + L-glutamate + H(+). The enzyme catalyses L-glutamine + H2O = L-glutamate + NH4(+). The protein operates within amino-acid biosynthesis; L-histidine biosynthesis; L-histidine from 5-phospho-alpha-D-ribose 1-diphosphate: step 5/9. Its function is as follows. IGPS catalyzes the conversion of PRFAR and glutamine to IGP, AICAR and glutamate. The HisH subunit catalyzes the hydrolysis of glutamine to glutamate and ammonia as part of the synthesis of IGP and AICAR. The resulting ammonia molecule is channeled to the active site of HisF. This chain is Imidazole glycerol phosphate synthase subunit HisH (hisH), found in Neisseria meningitidis serogroup B (strain ATCC BAA-335 / MC58).